A 100-amino-acid chain; its full sequence is uncharacterized protein (100 aa).

Residues 28 to 45 traverse the membrane as a helical segment; sequence VFLVFYIITMVKIYIFLI.

It is found in the membrane. This is an uncharacterized protein from Saccharomyces cerevisiae (strain ATCC 204508 / S288c) (Baker's yeast).